A 1150-amino-acid polypeptide reads, in one-letter code: Cohesin subunit SCC3 (1150 aa).

Basic residues predominate over residues Met1 to Thr12. A disordered region spans residues Met1 to Gln122. Residue Ser28 is modified to Phosphoserine. Residues Val32–His43 show a composition bias toward basic and acidic residues. The segment covering Glu44 to Val72 has biased composition (acidic residues). Residues Ala77–Lys87 are compositionally biased toward basic residues. The stretch at Leu305–Gln349 forms a coiled coil. Residues Phe367–Val457 enclose the SCD domain. Ser628 carries the post-translational modification Phosphoserine. The disordered stretch occupies residues Glu1065 to Asp1150. The segment covering Gln1083–Asn1101 has biased composition (basic and acidic residues).

The protein belongs to the SCC3 family. Interacts directly with MCD1 in cohesin complex. Cohesin complexes are composed of the SMC1 and SMC3 heterodimer attached via their hinge domain, MCD1 which link them, and IRR1/SCC3, which interacts with MCD1. The cohesin complex also interacts with SCC2, which is required for its association with chromosomes. Interacts with LIN1. Acetylated by ECO1.

Its subcellular location is the nucleus. It is found in the chromosome. The protein localises to the centromere. Component of cohesin complex, a complex required for the cohesion of sister chromatids after DNA replication. The cohesin complex apparently forms a large proteinaceous ring within which sister chromatids can be trapped. At anaphase, the MCD1/SCC1 subunit of the complex is cleaved and dissociates from chromatin, allowing sister chromatids to segregate. The cohesin complex may also play a role in spindle pole assembly during mitosis. This is Cohesin subunit SCC3 (IRR1) from Saccharomyces cerevisiae (strain ATCC 204508 / S288c) (Baker's yeast).